A 365-amino-acid chain; its full sequence is DNA replication and repair protein RecF (365 aa).

30-37 (GANGQGKT) contributes to the ATP binding site.

The protein belongs to the RecF family.

It localises to the cytoplasm. In terms of biological role, the RecF protein is involved in DNA metabolism; it is required for DNA replication and normal SOS inducibility. RecF binds preferentially to single-stranded, linear DNA. It also seems to bind ATP. The sequence is that of DNA replication and repair protein RecF from Geobacter metallireducens (strain ATCC 53774 / DSM 7210 / GS-15).